Consider the following 561-residue polypeptide: Sesquiterpene synthase 2 (561 aa).

4 residues coordinate Mg(2+): D313, D317, D458, and E466. Residues 313–317 (DDIYD) carry the DDXXD motif motif.

This sequence belongs to the terpene synthase family. Tpsa subfamily. Mn(2+) serves as cofactor. It depends on Mg(2+) as a cofactor.

The protein localises to the cytoplasm. It carries out the reaction (2E,6E)-farnesyl diphosphate + H2O = kunzeaol + diphosphate. It participates in secondary metabolite biosynthesis; terpenoid biosynthesis. Its function is as follows. Involved in the biosynthesis of kunzeaol. Produces mainly (-)-germacrene D along with gamma-cadinene. The protein is Sesquiterpene synthase 2 (STS2) of Thapsia garganica (Deadly carrot).